Consider the following 427-residue polypeptide: 3-phosphoshikimate 1-carboxyvinyltransferase (427 aa).

Residues Lys-20, Ser-21, and Arg-25 each contribute to the 3-phosphoshikimate site. Position 20 (Lys-20) interacts with phosphoenolpyruvate. Phosphoenolpyruvate-binding residues include Gly-90 and Arg-118. 6 residues coordinate 3-phosphoshikimate: Ser-163, Ser-164, Gln-165, Ser-191, Asp-309, and Lys-336. Gln-165 contributes to the phosphoenolpyruvate binding site. Residue Asp-309 is the Proton acceptor of the active site. Phosphoenolpyruvate-binding residues include Arg-340 and Arg-381.

Belongs to the EPSP synthase family. As to quaternary structure, monomer.

The protein localises to the cytoplasm. The catalysed reaction is 3-phosphoshikimate + phosphoenolpyruvate = 5-O-(1-carboxyvinyl)-3-phosphoshikimate + phosphate. It functions in the pathway metabolic intermediate biosynthesis; chorismate biosynthesis. Functionally, catalyzes the transfer of the enolpyruvyl moiety of phosphoenolpyruvate (PEP) to the 5-hydroxyl of shikimate-3-phosphate (S3P) to produce enolpyruvyl shikimate-3-phosphate and inorganic phosphate. The polypeptide is 3-phosphoshikimate 1-carboxyvinyltransferase (Methanococcoides burtonii (strain DSM 6242 / NBRC 107633 / OCM 468 / ACE-M)).